We begin with the raw amino-acid sequence, 119 residues long: Large ribosomal subunit protein uL24 (119 aa).

It belongs to the universal ribosomal protein uL24 family. In terms of assembly, part of the 50S ribosomal subunit.

Functionally, one of two assembly initiator proteins, it binds directly to the 5'-end of the 23S rRNA, where it nucleates assembly of the 50S subunit. Located at the polypeptide exit tunnel on the outside of the subunit. The protein is Large ribosomal subunit protein uL24 of Methanococcus maripaludis (strain C5 / ATCC BAA-1333).